The primary structure comprises 485 residues: UDP-N-acetylmuramoyl-L-alanyl-D-glutamate--2,6-diaminopimelate ligase (485 aa).

2 residues coordinate UDP-N-acetyl-alpha-D-muramoyl-L-alanyl-D-glutamate: L27 and S29. 106 to 112 contacts ATP; it reads GTSGKTS. Residues 148-149, S175, Q181, and R183 contribute to the UDP-N-acetyl-alpha-D-muramoyl-L-alanyl-D-glutamate site; that span reads TT. Position 215 is an N6-carboxylysine (K215). Residues R382, 406–409, G454, and E458 contribute to the meso-2,6-diaminopimelate site; that span reads DNPR. The Meso-diaminopimelate recognition motif signature appears at 406–409; the sequence is DNPR.

It belongs to the MurCDEF family. MurE subfamily. Mg(2+) serves as cofactor. Post-translationally, carboxylation is probably crucial for Mg(2+) binding and, consequently, for the gamma-phosphate positioning of ATP.

It is found in the cytoplasm. It catalyses the reaction UDP-N-acetyl-alpha-D-muramoyl-L-alanyl-D-glutamate + meso-2,6-diaminopimelate + ATP = UDP-N-acetyl-alpha-D-muramoyl-L-alanyl-gamma-D-glutamyl-meso-2,6-diaminopimelate + ADP + phosphate + H(+). The protein operates within cell wall biogenesis; peptidoglycan biosynthesis. Its function is as follows. Catalyzes the addition of meso-diaminopimelic acid to the nucleotide precursor UDP-N-acetylmuramoyl-L-alanyl-D-glutamate (UMAG) in the biosynthesis of bacterial cell-wall peptidoglycan. The protein is UDP-N-acetylmuramoyl-L-alanyl-D-glutamate--2,6-diaminopimelate ligase of Bradyrhizobium diazoefficiens (strain JCM 10833 / BCRC 13528 / IAM 13628 / NBRC 14792 / USDA 110).